A 324-amino-acid polypeptide reads, in one-letter code: Holliday junction branch migration complex subunit RuvB (324 aa).

The tract at residues 1–168 is large ATPase domain (RuvB-L); it reads MEDLALRPKT…FGIVEHLEYY (168 aa). Residues leucine 6, arginine 7, glycine 48, lysine 51, threonine 52, threonine 53, 115-117, arginine 158, tyrosine 168, and arginine 205 contribute to the ATP site; that span reads EDF. Threonine 52 lines the Mg(2+) pocket. A small ATPAse domain (RuvB-S) region spans residues 169-239; that stretch reads TPEELAQGVM…RALEALAALG (71 aa). Residues 242-324 form a head domain (RuvB-H) region; sequence ELGLEKRDRE…PPPVGPLLEP (83 aa). Residues arginine 297 and arginine 302 each contribute to the DNA site.

This sequence belongs to the RuvB family. In terms of assembly, homohexamer. Forms an RuvA(8)-RuvB(12)-Holliday junction (HJ) complex. HJ DNA is sandwiched between 2 RuvA tetramers; dsDNA enters through RuvA and exits via RuvB. An RuvB hexamer assembles on each DNA strand where it exits the tetramer. Each RuvB hexamer is contacted by two RuvA subunits (via domain III) on 2 adjacent RuvB subunits; this complex drives branch migration. In the full resolvosome a probable DNA-RuvA(4)-RuvB(12)-RuvC(2) complex forms which resolves the HJ.

It is found in the cytoplasm. The catalysed reaction is ATP + H2O = ADP + phosphate + H(+). With respect to regulation, the ATPase activity of RuvB is enhanced by RuvA. In terms of biological role, the RuvA-RuvB-RuvC complex processes Holliday junction (HJ) DNA during genetic recombination and DNA repair, while the RuvA-RuvB complex plays an important role in the rescue of blocked DNA replication forks via replication fork reversal (RFR). RuvA specifically binds to HJ cruciform DNA, conferring on it an open structure. The RuvB hexamer acts as an ATP-dependent pump, pulling dsDNA into and through the RuvAB complex. RuvB forms 2 homohexamers on either side of HJ DNA bound by 1 or 2 RuvA tetramers; 4 subunits per hexamer contact DNA at a time. Coordinated motions by a converter formed by DNA-disengaged RuvB subunits stimulates ATP hydrolysis and nucleotide exchange. Immobilization of the converter enables RuvB to convert the ATP-contained energy into a lever motion, pulling 2 nucleotides of DNA out of the RuvA tetramer per ATP hydrolyzed, thus driving DNA branch migration. The RuvB motors rotate together with the DNA substrate, which together with the progressing nucleotide cycle form the mechanistic basis for DNA recombination by continuous HJ branch migration. Branch migration allows RuvC to scan DNA until it finds its consensus sequence, where it cleaves and resolves cruciform DNA. Has Mg(2+)-, DNA-dependent ATPase activity; dsDNA and supercoiled DNA but not ssDNA stimulate activity. Binds to linear dsDNA in the absence of ATP or ATP-gamma-S. This subunit can promote Holliday junction migration alone in vitro. Partially complements an E.coli deletion for UV sensitivity. This is Holliday junction branch migration complex subunit RuvB from Thermus thermophilus.